The primary structure comprises 604 residues: Kelch-like protein 15 (604 aa).

The region spanning 31–98 is the BTB domain; it reads LDVTLLIEEH…MYYGSLELSM (68 aa). Positions 133–237 constitute a BACK domain; the sequence is CAEVMRLLED…TPANIFEKVK (105 aa). 5 Kelch repeats span residues 328–379, 381–426, 428–473, 489–542, and 544–592; these read FAFL…VIGK, IYAV…VLNG, LYIT…NKSK, KLYV…VLDK, and IMVL…SLHF.

The protein localises to the nucleus. It functions in the pathway protein modification; protein ubiquitination. In terms of biological role, substrate-specific adapter for an E3 ubiquitin-protein ligase complex. The polypeptide is Kelch-like protein 15 (klhl15) (Danio rerio (Zebrafish)).